Reading from the N-terminus, the 1002-residue chain is Lon protease homolog, mitochondrial (1002 aa).

The region spanning 102–313 is the Lon N-terminal domain; it reads VIALPLPHRP…LTLELVKKEM (212 aa). 468–475 contacts ATP; the sequence is GPPGVGKT. The Lon proteolytic domain occupies 811 to 995; the sequence is QTPVGVVMGL…NEIFDIAFQS (185 aa). Active-site residues include S901 and K944.

The protein belongs to the peptidase S16 family. In terms of assembly, homohexamer or homoheptamer. Organized in a ring with a central cavity.

The protein resides in the mitochondrion matrix. It catalyses the reaction Hydrolysis of proteins in presence of ATP.. Its function is as follows. ATP-dependent serine protease that mediates the selective degradation of misfolded, unassembled or oxidatively damaged polypeptides as well as certain short-lived regulatory proteins in the mitochondrial matrix. May also have a chaperone function in the assembly of inner membrane protein complexes. Participates in the regulation of mitochondrial gene expression and in the maintenance of the integrity of the mitochondrial genome. Binds to mitochondrial DNA in a site-specific manner. The protein is Lon protease homolog, mitochondrial of Oryza sativa subsp. indica (Rice).